We begin with the raw amino-acid sequence, 470 residues long: Aromatic amino acid aminotransferase C569.07 (470 aa).

Belongs to the class-I pyridoxal-phosphate-dependent aminotransferase family. Pyridoxal 5'-phosphate is required as a cofactor.

It localises to the cytoplasm. The enzyme catalyses an aromatic L-alpha-amino acid + 2-oxoglutarate = an aromatic oxo-acid + L-glutamate. Has aromatic amino acid transaminase activity. This chain is Aromatic amino acid aminotransferase C569.07, found in Schizosaccharomyces pombe (strain 972 / ATCC 24843) (Fission yeast).